The primary structure comprises 162 residues: Larval cuticle protein F1 (162 aa).

4 tandem repeats follow at residues 27 to 30 (AAPV), 43 to 46 (AAPV), 59 to 62 (AAPV), and 75 to 78 (AAPA).

Its function is as follows. Component of the larval cuticle. The polypeptide is Larval cuticle protein F1 (Tenebrio molitor (Yellow mealworm beetle)).